The primary structure comprises 480 residues: UDP-glucose 6-dehydrogenase 3 (480 aa).

NAD(+) is bound by residues 8–13 (GAGYVG), D33, R38, 86–90 (VNTPT), 127–128 (ST), and E161. Substrate-binding positions include 157–161 (EFLAE), 216–223 (KLAANAFL), and 256–269 (RIGP…VGFG). Catalysis depends on C272, which acts as the Nucleophile. 272 to 275 (CFQK) provides a ligand contact to NAD(+). Residue 334 to 335 (FK) coordinates substrate. R342 is a binding site for NAD(+). A substrate-binding site is contributed by R447.

Belongs to the UDP-glucose/GDP-mannose dehydrogenase family.

It catalyses the reaction UDP-alpha-D-glucose + 2 NAD(+) + H2O = UDP-alpha-D-glucuronate + 2 NADH + 3 H(+). It participates in nucleotide-sugar biosynthesis; UDP-alpha-D-glucuronate biosynthesis; UDP-alpha-D-glucuronate from UDP-alpha-D-glucose: step 1/1. Inhibited by UDP-xylose. Functionally, involved in the biosynthesis of UDP-glucuronic acid (UDP-GlcA), providing nucleotide sugars for cell-wall polymers. Required for the formation of cell wall ingrowths on the outer cell walls of nematode-induced syncytia. This chain is UDP-glucose 6-dehydrogenase 3 (UGD3), found in Arabidopsis thaliana (Mouse-ear cress).